The chain runs to 30 residues: PLEALNVQLYNVEVXXTNDKGEADXPGEIQ.

As to quaternary structure, binds to carcinoembryonic antigen (CEA). Post-translationally, the N-terminus is blocked.

The protein resides in the cell membrane. May play a role in the development of hepatic metastases from colorectal cancers. The chain is 80 kDa carcinoembryonic antigen-binding protein from Rattus norvegicus (Rat).